The chain runs to 523 residues: Nondiscriminating glutamyl-tRNA synthetase EARS2, mitochondrial (523 aa).

Residues 1–41 (MAALLRRLLQRERPSAASGRPVGRREANLGTDAGVAVRVRF) constitute a mitochondrion transit peptide. 40 to 42 (RFA) serves as a coordination point for L-glutamate. Residues 45–53 (PTGFLHLGG) carry the 'HIGH' region motif. Histidine 50 is an ATP binding site. Residues glutamate 76, 228–232 (YHLAC), and arginine 246 contribute to the L-glutamate site. An ATP-binding site is contributed by glutamate 249. An N6-succinyllysine modification is found at lysine 256. Position 284-288 (284-288 (KLSKR)) interacts with ATP. The 'KMSKS' region motif lies at 284–288 (KLSKR). Lysine 486 bears the N6-acetyllysine mark.

Belongs to the class-I aminoacyl-tRNA synthetase family. Glutamate--tRNA ligase type 1 subfamily.

It localises to the mitochondrion matrix. It catalyses the reaction tRNA(Glx) + L-glutamate + ATP = L-glutamyl-tRNA(Glx) + AMP + diphosphate. The enzyme catalyses tRNA(Glu) + L-glutamate + ATP = L-glutamyl-tRNA(Glu) + AMP + diphosphate. The catalysed reaction is tRNA(Gln) + L-glutamate + ATP = L-glutamyl-tRNA(Gln) + AMP + diphosphate. Its function is as follows. Non-discriminating glutamyl-tRNA synthetase that catalyzes aminoacylation of both mitochondrial tRNA(Glu) and tRNA(Gln) and participates in RNA aminoacylation for mitochondrial protein translation. Attachs glutamate to tRNA(Glu) or tRNA(Gln) in a two-step reaction: glutamate is first activated by ATP to form Glu-AMP and then transferred to the acceptor end of tRNA(Glu) or tRNA(Gln). In vitro, cytoplasmic tRNA(Gln) is slightly glutamylated, but with low activity. This Homo sapiens (Human) protein is Nondiscriminating glutamyl-tRNA synthetase EARS2, mitochondrial.